The following is a 311-amino-acid chain: tRNA dimethylallyltransferase (311 aa).

12–19 is a binding site for ATP; it reads GPTASGKT. 14-19 is a binding site for substrate; sequence TASGKT. Interaction with substrate tRNA stretches follow at residues 37 to 40, 161 to 165, and 241 to 246; these read DSAL, QRINR, and RCVGYR.

The protein belongs to the IPP transferase family. Monomer. Requires Mg(2+) as cofactor.

The enzyme catalyses adenosine(37) in tRNA + dimethylallyl diphosphate = N(6)-dimethylallyladenosine(37) in tRNA + diphosphate. Functionally, catalyzes the transfer of a dimethylallyl group onto the adenine at position 37 in tRNAs that read codons beginning with uridine, leading to the formation of N6-(dimethylallyl)adenosine (i(6)A). The protein is tRNA dimethylallyltransferase of Histophilus somni (strain 2336) (Haemophilus somnus).